A 220-amino-acid polypeptide reads, in one-letter code: Homeobox-leucine zipper protein ATHB-21 (220 aa).

The segment at 26–48 (VPQQGGEAKPTRRRKRKSKSVVV) is disordered. The homeobox DNA-binding region spans 58–117 (GWFRKRKLSDEQVRMLEISFEDDHKLESERKDRLASELGLDPRQVAVWFQNRRARWKNKR). The segment at 118–146 (VEDEYTKLKNAYETTVVEKCRLDSEVIHL) is leucine-zipper.

Belongs to the HD-ZIP homeobox family. Class I subfamily. In terms of tissue distribution, widely expressed.

The protein resides in the nucleus. Probable transcription factor. This is Homeobox-leucine zipper protein ATHB-21 (ATHB-21) from Arabidopsis thaliana (Mouse-ear cress).